Here is a 318-residue protein sequence, read N- to C-terminus: Lipid A biosynthesis acyltransferase (318 aa).

A helical membrane pass occupies residues 27–47 (PQYWGIWLGIFFLLLLAFVPF). The HXXXXD motif signature appears at 145-150 (HGWAID).

It belongs to the LpxL/LpxM/LpxP family. LpxM subfamily.

It localises to the cell inner membrane. The catalysed reaction is an alpha-Kdo-(2-&gt;4)-alpha-Kdo-(2-&gt;6)-(acyl)-lipid IVA + a fatty acyl-[ACP] = an alpha-Kdo-(2-&gt;4)-alpha-Kdo-(2-&gt;6)-lipid A + holo-[ACP]. It participates in glycolipid biosynthesis; KDO(2)-lipid A biosynthesis; KDO(2)-lipid A from CMP-3-deoxy-D-manno-octulosonate and lipid IV(A): step 4/4. Its pathway is bacterial outer membrane biogenesis; lipopolysaccharide biosynthesis. In terms of biological role, catalyzes the transfer of an acyl chain from an acyl-[acyl-carrier-protein] (ACP) to a Kdo(2)-(acyl)-lipid IV(A) to form a Kdo(2)-lipid A. In Haemophilus influenzae (strain ATCC 51907 / DSM 11121 / KW20 / Rd), this protein is Lipid A biosynthesis acyltransferase.